Consider the following 1431-residue polypeptide: Stabilin-2 (1431 aa).

At 1 to 1322 the chain is on the extracellular side; sequence SLPSLLTRLE…PPTAATAAHS (1322 aa). One can recognise an FAS1 domain in the interval 2 to 130; that stretch reads LPSLLTRLEQ…GVIHGLEKVL (129 aa). Residues asparagine 112 and asparagine 140 are each glycosylated (N-linked (GlcNAc...) asparagine). Residues 207–272 form the Laminin EGF-like 1 domain; that stretch reads PQCQACPGRG…CSCVHGRCSQ (66 aa). Disulfide bonds link cysteine 212-cysteine 226, cysteine 220-cysteine 236, cysteine 238-cysteine 247, cysteine 259-cysteine 270, cysteine 263-cysteine 280, cysteine 282-cysteine 291, cysteine 300-cysteine 310, cysteine 304-cysteine 320, cysteine 322-cysteine 333, cysteine 339-cysteine 352, cysteine 346-cysteine 362, cysteine 364-cysteine 375, cysteine 381-cysteine 394, cysteine 388-cysteine 404, cysteine 406-cysteine 417, cysteine 423-cysteine 436, cysteine 430-cysteine 446, and cysteine 448-cysteine 459. N-linked (GlcNAc...) asparagine glycans are attached at residues asparagine 231 and asparagine 243. 4 EGF-like domains span residues 296–334, 335–376, 377–418, and 419–460; these read TTDN…TVCT, AINA…IVCL, EINP…KVCS, and LINV…IVCR. N-linked (GlcNAc...) asparagine glycosylation occurs at asparagine 301. An N-linked (GlcNAc...) asparagine glycan is attached at asparagine 329. A glycan (N-linked (GlcNAc...) asparagine) is linked at asparagine 437. FAS1 domains are found at residues 460–588 and 604–745; these read RGSI…DKLL and VLQN…DCLL. Asparagine 607 carries N-linked (GlcNAc...) asparagine glycosylation. In terms of domain architecture, Laminin EGF-like 2 spans 822-887; that stretch reads PDCQACPGGP…SCSEHGQCDE (66 aa). Disulfide bonds link cysteine 827-cysteine 841, cysteine 835-cysteine 851, cysteine 853-cysteine 862, cysteine 874-cysteine 885, cysteine 879-cysteine 895, and cysteine 897-cysteine 906. Asparagine 858 carries N-linked (GlcNAc...) asparagine glycosylation. Residue asparagine 929 is glycosylated (N-linked (GlcNAc...) asparagine). 2 EGF-like domains span residues 947-987 and 988-1030; these read VVDF…YSCI and EIDP…VDCE. Disulfide bonds link cysteine 951-cysteine 964, cysteine 958-cysteine 973, cysteine 975-cysteine 986, cysteine 992-cysteine 1006, cysteine 1000-cysteine 1016, cysteine 1018-cysteine 1029, cysteine 1085-cysteine 1154, and cysteine 1109-cysteine 1130. The 94-residue stretch at 1063–1156 folds into the Link domain; that stretch reads GVFHLRSPLG…SEMWDVFCYR (94 aa). N-linked (GlcNAc...) asparagine glycosylation is found at asparagine 1145, asparagine 1161, asparagine 1233, asparagine 1249, and asparagine 1258. The 135-residue stretch at 1176–1310 folds into the FAS1 4 domain; that stretch reads SGNLLQVLMS…GILHIISEPL (135 aa). A helical transmembrane segment spans residues 1323 to 1343; that stretch reads GLGTGIFCAVVLVTGAIALAA. Residues 1344–1431 lie on the Cytoplasmic side of the membrane; that stretch reads YSYFRLKQRT…QQATTVTVPR (88 aa). Residues 1368–1378 are interaction with TMSB4X; that stretch reads WLLASSSPRIS.

Interacts with GULP1, heparin, alpha-M/beta-2 integrin (ITGAM and ITGB2), and thymosin beta 4 (TMSB4X). In terms of processing, glycosylated. Proteolytically processed to yield a 175 kDa protein. As to expression, initially expressed in all vascular cells, including those of sinusoidal-like structures, vitellin veins, and hepatic veins or sinus venosus, in E13.5 fetal liver. The expression then progressively disappears in the portal and hepatic veins, but the expression in sinusoidals endothelial cells (SECs) is retained and becomes stronger during development.

It is found in the cytoplasm. The protein localises to the cell membrane. Its function is as follows. Phosphatidylserine receptor that enhances the engulfment of apoptotic cells. Hyaluronan receptor that binds to and mediates endocytosis of hyaluronic acid (HA). Also acts, in different species, as a primary systemic scavenger receptor for heparin (Hep), chondroitin sulfate (CS), dermatan sulfate (DS), nonglycosaminoglycan (GAG), acetylated low-density lipoprotein (AcLDL), pro-collagen propeptides and advanced glycation end products (AGE). May serve to maintain tissue integrity by supporting extracellular matrix turnover or it may contribute to maintaining fluidity of bodily liquids by resorption of hyaluronan. Counter receptor which plays an important role in lymphocyte recruitment in the hepatic vasculature. Binds to both Gram-positive and Gram-negative bacteria and may play a role in defense against bacterial infection. The proteolytically processed 175 kDa form also functions as an endocytosis receptor for heparin internalization as well as HA and CS. The protein is Stabilin-2 of Rattus norvegicus (Rat).